Consider the following 805-residue polypeptide: Centrosomal protein of 85 kDa-like (805 aa).

Disordered regions lie at residues 1–27 (MWGRFLAPEASGRDSPGGARSFPAGPD) and 50–89 (RNNHIRRHSIASDSGDTGIGTSCSDSVEDHSTSSGTLSFK). Position 15 is a phosphoserine (S15). Residues 60–74 (ASDSGDTGIGTSCSD) are compositionally biased toward polar residues. S207 carries the post-translational modification Phosphoserine. Residues 439 to 682 (SQQGEFEQKL…LENQRQTDET (244 aa)) adopt a coiled-coil conformation.

The protein belongs to the CEP85 family. As to expression, isoform 1 and isoform 4 are expressed in spleen, lymph, thymus, tonsil and peripheral blood leukocytes, with isoform 1 expressed at higher levels. Isoform 4 is detected in K-562 leukemia cells and in the blood of precursor T lymphoblastic lymphoma (T-ALL) patients.

It is found in the cytoplasm. The protein resides in the cytoskeleton. Its subcellular location is the microtubule organizing center. The protein localises to the centrosome. In terms of biological role, plays an essential role in neuronal cell migration. The chain is Centrosomal protein of 85 kDa-like from Homo sapiens (Human).